The sequence spans 6486 residues: MKKQENIAKIYPLTPLQEGMLFHAVTDTGSSAYCLQMSATIEGDFHLPLFEKSLNKLVENYEVLRTAFVYQNMQRPRQVVFKERKVTVPCENIAHLPSAEQDAYIQAYTKQHHAFDLTKDNLMKAAIFQTAENKYRLVWAFHHIIVDGWTLGVLLHKLLTYYAALRKGEPIPREATKPYSEYIKWLDKQNKDEALAYWQNYLAGYDHQAAFPKKKLGTEASRYEHVEAMFTIAPEKTQQLIQIANQNQATMSSVFQALWGILASTYKNADDVVFGSVVSGRPPQIQGIESMVGLFINTIPTRVQTNKQQTFSELLQTVQKQALASATYDFAPLYEIQSTTVLKQELIDHLVTFENYPDHSMKHLEESLGFQFTVESGDEQTSYDLNVVVALAPSNELYVKLSYNAAVYESSFVNRIEGHLRTVIDQVIGNPHVHLHEIGIITEEEKQQLLVAYNDTAAEYPRDKTIFELIAEQASRTPAKAAVVCGEDTLTYQELMERSAQLANALREKGIASGSIVSIMAEHSLELIVAIMAVLRSGAAYLPIDPEYPQDRIQYLLDDSQTTLLLTQSHLQPNIRFAGSVLYLDDRSLYEGGSTSFAPESKPDDLAYMIYTSGSTGNPKGAMITHQGLVNYIWWANKVYVQGEAVDFPLYSSISFDLTVTSIFTPLLSGNTIHVYRGADKVQVILDIIKDNKVGIIKLTPTHLKLIEHIDGKASSIRRFIVGGENLPTKLAKQIYDHFGENVQIFNEYGPTETVVGCMIYLYDPQTTTQESVPIGVPADNVQLYLLDASMQPVPVGSLGEMYIAGDGVAKGYFNRPELTKEKFIDNPFRPGTKMYRTGDLAKWLPDGNMEYAGRMDYQVKIRGHRIEMGEIETRLTQHEAVKEAVVIVEKDESGQNVLYAYLVSERELTVAELREFLGRTLPSYMIPSFFIRLAEIPLTANGKVERKKLPKPAGAVVTGTAYAAPQNEIEAKLAEIWQQVLGISQVGIHDDFFDLGGHSLKAMTVVFQVSKALEVELPVKALFEHPTVAELARFLSRSEKTEYTAIQPVAAQEFYPVSSAQKRMYILQQFEGNGISYNISGAILLEGKLDYARFASAVQQLAERHEALRTSFHRIDGEPVQKVHEEVEVPLFMLEAPEDQAEKIMREFVRPFDLGVAPLMRTGLLKLGKDRHLFLLDMHHIISDGVSSQILLREFAELYQGADLQPLSLQYKDFAAWQNELFQTEAYKKQEQHWLNTFADEIPLLNLPTDYPRPSVQSFAGDLVLFAAGKELLERLQQVASETGTTLYMILLAAYNVLLSKYTGQEDIIVGTPVAGRSHADVENIMGIFVNTLALRNQPASSKTFAQFLQEVKQNALAAYDHQDYPFEELVEKLAIQRDISRNPLFDTLFSLENANQQSLAIAELTASPYELFNKISKFDLALNASESPADIQFQLTFATKLFKKETVERMARHYLEILRWISEQPTASLADIDMMTEAEKRTLLLNVNDTFVERTAATALHQLVEEQAARTPDEVAVVYEEYALTYRELNARANQLARLLRSHGTGPDTLIGIMVDRSPGMVVGMLAVLKAGGAYTPIDPSYPPERIQYMLSDSQAPILLTQRHLQELAAYQGEIIDVDEEAIYTGADTNLDNVAGKDDLAYVIYTSGSTGNPKGVMISHQAICNHMLWMRETFPLTTEDAVLQKTPFSFDASVWEFYLPLITGGQLVLAKPDGHRDIAYMTRLIRDEKITTLQMVPSLLDLVMTDPGWSACTSLQRVFCGGEALTPALVSRFYETQQAQLINLYGPTETTIDATYWPCPRQQEYSAIPIGKPIDNVRLYVVNASNQLQPVGVAGELCIAGDGLARGYWQREELTKASFVDNPFEPGGTMYRTGDMVRYLPDGHIEYLGRIDHQVKIRGHRIELGEIEATLLQHEAVKAVVVMARQDGKGQNSLYAYVVAEQDIQTAELRTYLSATLPAYMVPSAFVFLEQLPLSANGKVDRKALPQPEDAAASAAVYVAPRNEWEAKLAAIWESVLGVEPIGVHDHFFELGGHSLKAMHVISLLQRSFQVDVPLKVLFESPTIAGLAPLVAAARKGTYTAIPPVEKQEYYPVSAAQKRMFILQQMEGAGISYNMPGFMYLDGKLDTERLQQALKSLVQRHESLRTSFHSVQGETVQRVHDDVDLAISFGEATEAETRQIAEQFIQPFDLGTAPLLRAGLIKLAPERHLFMLDLHHIVVDGVSIGLLIEEFAQLYHGEELPALRIQYKDFAKWQQDWFQTEEFAEQEAYWLNTFTGEIPVLNLPTDYPRPSVKSFAGDRFVFGSGTALPKQLHQLAQETGTTLYMVLLAAYNVLLSKYSRQEDIIVGAPTAGRSHAETESIVGMFVNTLALRNEPAGGKTFRDFLAEVKINTLGAFEHQDYPLDELVDKLDMQRDLSRNPLFDTVFILQNMEQKPFEMEQLTITPYSAEVKQAKFDLSLEAYEENAEIIFSLDYSTKLFSRETIEKIATHFIQILRAVIAEPEMPLSEITMLTEAEKQRLLVDFNGAHKDFPQNKTLQALFEEQAEKSPQATAVEISGQPLSYQELNERANQLAATLRERGVQPDQPVGIMANRSVEMVVGILAILKAGGAYVPIDPEYPEERVAYMLTDCQARLVLTQKHLGAKLGSSVTAECLYLDDESNYGVHRSNLQPINTASDLAYIIYTSGTTGKPKGVMVEHRGIVNNVLWKKAEYQMKVGDRSLLSLSFAFDAFVLSFFTPVLSGATVVLAEDEEAKDPVSLKKLIAASRCTLMTGVPSLFQAILECSTPADIRPLQTVTLGGEKITAQLVEKCKQLNPDLVIVNEYGPTESSVVATWQRLAGPDAAITIGRPIANTSLYIVNQYHQLQPIGVVGEICIGGRGLARGYWNKPALTEEKFVSHPFAAGERMYKTGDLGKWLPDGTIEYIGRIDEQVKVRGYRIEIGEIESALLAAEKLTAAVVVVYEDQLGQSALAAYFTADEQLDVTKLWSHLSKRLPSYMIPAHFVQLDQLPLTPNGKVDKKALPKPEGKPVTEAQYVAPTNAVESKLAEIWERVLGVSGIGILDNFFQIGGHSLKAMAVAAQVHREYQVELPLKVLFAQPTIKALAQYVATSGKETYVPIEPAPLQEYYPVSSAQKRMYVLRQFADTGTVYNMPSALYIEGDLDRKRFEAAIHGLVERHESLRTSFHTVNGEPVQRVHEHVELNVQYAEVTEAQVEPTVESFVQAFDLTKAPLLRVGLFKLAAKRHLFLLDMHHIISDGVSAGIIMEEFSKLYRGEELPALSVHYKDFAVWQSELFQSDVYTEHENYWLNAFSGDIPVLNLPADFSRPLTQSFEGDCVSFQADKALLDDLHKLAQESQSTLFMVLLAAYNVLLAKYSGQEDIVVGTPIAGRSHADIENVLGMFVNTLALRNYPVETKHFQAFLEEVKQNTLQAYAHQDYPFEALVEKLDIQRDLSRNPLFDTMFILQNLDQKAYELDGLKLEAYPAQAGNAKFDLTLEAHEDETGIHFALVYSTKLFQRESIERMAGHFLQVLRQVVADQATALREISLLSEEERRIVTVDFNNTFAAYPRDLTIQELFEQQAAKTPEHAAVVMDGQMLTYRELNEKANQLAHVLRQNGVGKESIVGLLADRSLEMITGIMGILKAGGAYLGLDPEHPSERLAYMLEDGGVKVVLVQKHLLPLVGEGLMPIVLEEESLRPEDCGNPAIVNGASDLAYVMYTSGSTGKPKGVMVEHRNVTRLVMHTNYVQVRESDRMIQTGAIGFDAMTFEIFGALLHGASLYLVSKDVLLDAEKLGDFLRTNQITTMWLTSPLFNQLSQDNPAMFDSLRALIVGGEALSPKHINRVKSALPDLEIWNGYGPTENTTFSTCYLIEQHFEEQIPIGKPIANSTAYIVDGNNQPQPIGVPGELCVGGDGVARGYVNKPELTAEKFVPNPFAPGETMYRTGDLARWLPDGTIEYLGRIDQQVKIRGYRIELGEIETVLSQQAQVKEAVVAVIEEANGQKALCAYFVPEQAVDAAELREAMSKQLPGYMVPAYYVQMEKLPLTANGKVDRRALPQPSGERTTGSAFVAAQNDTEAKLQQIWQEVLGIPAIGIHDNFFEIGGHSLKAMNVITQVHKTFQVELPLKALFATPTIHELAAHIAESAFEQFETIQPVEPAAFYPVSFAQKRMYILHQFEGSGISYNVPSVLVLEGKLDYDRFAAAIQSLVKRHESLRTSFHSVNGEPLQRVHPDVELPVRLLEATEDQSESLIQELIQPFDLEIAPLFRVNLIKLGAERHLFFMDMHHIISDGVSLAVIVEEIASLYAGKQLSDLRIQYKDFAVWQTKLAQSDRFQKQEDFWTRTFAGEIPLLNLPHDYPRPSVQSFDGDTVALGTGHHLLEQLRKLAAETGTTLFMVLLAAYHVLLSKYAGQEEIVVGTPIAGRSHADVERIVGMFVNTLALKNTAAGSLSFRAFLEDVKQNALHAFEHQDYPFEHLVEKLQVRRDLSRNPLFDTMFSLGLAESAEGEVADLKVSPYPVNGHIAKFDLSLDAMEKQDGLLVQFSYCTKLFAKETVDRLAAHYVQLLQTITADPDIELARISVLSKAETEHMLHSFLATKTAYPTDKTFQKLFEEQVEKTPNEIAVLFGNEQLTYQELNAKANQLARVLRRKGVKPESTVGILVDRSLYMVIGMLAVLKAGGTFVPIDPDYPLERQAFMLEDSEAKLLLTLQKMNSQVAFPYETFYLDTETVDQEETGNLEHVAQPENVAYIIYTSGTTGKPKGVVIEHRSYANVAFAWKDEYHLDSFPVRLLQMASFAFDVSTGDFARALLTGGQLVICPNGVKMDPASLYETIRRHEITIFEATPALIMPLMHYVYENELDMSQMKLLILGADSCPAEDFKTLLARFGQKMRIINSYGVTEACIDTSYYEETDVTAIRSGTVPIGKPLPNMTMYVVDAHLNLQPVGVVGELCIGGAGVARGYLNRPELTEEKFVPNPFAPGERLYRTGDLAKWRADGNVEFLGRNDHQVKIRGVRIELGEIETQLRKLDGITEAVVVAREDRGQEKELCAYVVADHKLDTAELRANLLKELPQAMIPAYFVTLDALPLTANGKVDRRSLPAPDVTMLRTTEYVAPRSVWEARLAQVWEQVLNVPQVGALDDFFALGGHSLRAMRVLSSMHNEYQVDIPLRILFEKPTIQELAAFIEETAKGNVFSIEPVQKQAYYPVSSAQKRMYILDQFEGVGISYNMPSTMLIEGKLERTRVEAAFQRLIARHESLRTSFAVVNGEPVQNIHEDVPFALAYSEVTEQEARELVSSLVQPFDLEVAPLIRVSLLKIGEDRYVLFTDMHHSISDGVSSGILLAEWVQLYQGDVLPELRIQYKDFAVWQQEFSQSAAFHKQEAYWLQTFADDIPVLNLPTDFTRPSTQSFAGDQCTIGAGKALTEGLHQLAQATGTTLYMVLLAAYNVLLAKYAGQEDIIVGTPITGRSHADLEPIVGMFVNTLAMRNKPQREKTFSEFLQEVKQNALDAYGHQDYPFEELVEKLAIARDLSRNPLFDTVFTFQNSTEEVMTLPECTLAPFMTDETGQHAKFDLTFSATEEREEMTIGVEYSTSLFTRETMERFSRHFLTIAASIVQNPHIRLGEIDMLLPEEKQQILAGFNDTAVSYALDKTLHQLFEEQVDKTPDQAALLFSEQSLTYSELNERANRLARVLRAKGVGPDRLVAIMAERSPEMVIGILGILKAGGAYVPVDPGYPQERIQYLLEDSNAALLLSQAHLLPLLAQVSSELPECLDLNAELDAGLSGSNLPAVNQPTDLAYVIYTSGTTGKPKGVMIPHQGIVNCLQWRRDEYGFGPSDKALQVFSFAFDGFVASLFAPLLGGATCVLPQEAAAKDPVALKKLMAATEVTHYYGVPSLFQAILDCSTTTDFNQLRCVTLGGEKLPVQLVQKTKEKHPAIEINNEYGPTENSVVTTISRSIEAGQAITIGRPLANVQVYIVDEQHHLQPIGVVGELCIGGAGLARGYLNKPELTAEKFVANPFRPGERMYKTGDLVKWRTDGTIEYIGRADEQVKVRGYRIEIGEIESAVLAYQGIDQAVVVARDDDATAGSYLCAYFVAATAVSVSGLRSHLAKELPAYMIPSYFVELDQLPLSANGKVDRKALPKPQQSDATTREYVAPRNATEQQLAAIWQEVLGVEPIGITDQFFELGGHSLKATLLIAKVYEYMQIELPLNLIFQYPTIEKVADFITHKRFESRYGTAILLNQETARNVFCFTPIGAQSVYYQKLAAEIQGVSLYSFDFIQDDNRMEQYIAAITAIDPSGPYTLMGYSSGGNLAFEVAKELEERGYGVTDIILFDSYWKDKAIERTVAETENDIAQLFAEIGENTEMFNMTQEDFQLYAANEFVKQSFVRKTVSYVMFHNNLVNTGMTTAAIHLIQSELEADEEAPVAAKWNESAWANATQRLLTYSGHGIHSRMLAGDYASQNASILQNILQELFILK.

A domain 1 (asparagine-activating) region spans residues 466–1038; it reads IFELIAEQAS…VAELARFLSR (573 aa). Carrier domains follow at residues 965-1040, 2002-2077, 3040-3115, 4075-4150, 5119-5194, and 6162-6237; these read APQN…SRSE, APRN…AAAR, APTN…ATSG, AAQN…AESA, APRS…EETA, and APRN…THKR. O-(pantetheine 4'-phosphoryl)serine occurs at positions 1000, 2037, 3075, 4110, 5154, and 6197. A domain 2 (glutamine-activating) region spans residues 1521-2070; it reads YEEYALTYRE…FESPTIAGLA (550 aa). The interval 2536–3113 is domain 3 (tyrosine-activating); it reads NKTLQALFEE…IKALAQYVAT (578 aa). The domain 4 (valine-activating) stretch occupies residues 3590–4149; the sequence is EHAAVVMDGQ…HELAAHIAES (560 aa). The segment at 4606–5203 is domain 5 (ornithine-activating); sequence YPTDKTFQKL…AKGNVFSIEP (598 aa). The tract at residues 5658–6245 is domain 6 (leucine-activating); that stretch reads LHQLFEEQVD…KRFESRYGTA (588 aa).

Belongs to the ATP-dependent AMP-binding enzyme family. In terms of assembly, large multienzyme complex of TycA, TycB and TycC. The cofactor is pantetheine 4'-phosphate.

It participates in antibiotic biosynthesis; tyrocidine biosynthesis. Incorporates six amino acids (for tyrocidine A, Asn, Gln, Tyr, Val, Orn, and Leu) in their L-configuration into the peptide product. This Brevibacillus parabrevis protein is Tyrocidine synthase 3 (tycC).